Consider the following 392-residue polypeptide: Na(+)/H(+) antiporter NhaA (392 aa).

11 helical membrane-spanning segments follow: residues Ile-17–Leu-37, Leu-59–Val-79, Ile-95–Phe-115, Gly-125–Gly-145, Val-154–Phe-174, Val-179–Trp-199, Phe-213–Val-233, Val-254–Val-274, Val-290–Val-310, Ile-328–Leu-348, and Leu-363–Val-383.

Belongs to the NhaA Na(+)/H(+) (TC 2.A.33) antiporter family.

Its subcellular location is the cell inner membrane. The enzyme catalyses Na(+)(in) + 2 H(+)(out) = Na(+)(out) + 2 H(+)(in). Na(+)/H(+) antiporter that extrudes sodium in exchange for external protons. The polypeptide is Na(+)/H(+) antiporter NhaA (Proteus mirabilis (strain HI4320)).